Reading from the N-terminus, the 512-residue chain is D-alanine--D-alanyl carrier protein ligase (512 aa).

ATP is bound at residue 152–153 (TS). Asp-199 is a D-alanine binding site. 294 to 299 (NAYGPT) serves as a coordination point for ATP. Val-303 provides a ligand contact to D-alanine. ATP contacts are provided by residues Asp-385, 397-400 (YGGR), and Lys-499. Lys-499 contacts D-alanine.

It belongs to the ATP-dependent AMP-binding enzyme family. DltA subfamily.

The protein resides in the cytoplasm. It catalyses the reaction holo-[D-alanyl-carrier protein] + D-alanine + ATP = D-alanyl-[D-alanyl-carrier protein] + AMP + diphosphate. Its pathway is cell wall biogenesis; lipoteichoic acid biosynthesis. Catalyzes the first step in the D-alanylation of lipoteichoic acid (LTA), the activation of D-alanine and its transfer onto the D-alanyl carrier protein (Dcp) DltC. In an ATP-dependent two-step reaction, forms a high energy D-alanyl-AMP intermediate, followed by transfer of the D-alanyl residue as a thiol ester to the phosphopantheinyl prosthetic group of the Dcp. D-alanylation of LTA plays an important role in modulating the properties of the cell wall in Gram-positive bacteria, influencing the net charge of the cell wall. The sequence is that of D-alanine--D-alanyl carrier protein ligase from Streptococcus pyogenes serotype M18 (strain MGAS8232).